A 340-amino-acid polypeptide reads, in one-letter code: S-adenosylmethionine:tRNA ribosyltransferase-isomerase (340 aa).

Belongs to the QueA family. In terms of assembly, monomer.

The protein resides in the cytoplasm. It carries out the reaction 7-aminomethyl-7-carbaguanosine(34) in tRNA + S-adenosyl-L-methionine = epoxyqueuosine(34) in tRNA + adenine + L-methionine + 2 H(+). It participates in tRNA modification; tRNA-queuosine biosynthesis. Functionally, transfers and isomerizes the ribose moiety from AdoMet to the 7-aminomethyl group of 7-deazaguanine (preQ1-tRNA) to give epoxyqueuosine (oQ-tRNA). The protein is S-adenosylmethionine:tRNA ribosyltransferase-isomerase of Macrococcus caseolyticus (strain JCSC5402) (Macrococcoides caseolyticum).